Reading from the N-terminus, the 347-residue chain is NADH-ubiquinone oxidoreductase chain 2 (347 aa).

A run of 10 helical transmembrane segments spans residues 1-21 (MNPL…AIVA), 25-45 (HWLM…PILM), 59-79 (YFLT…MNLV), 111-131 (FHFW…LILL), 149-169 (INLD…GWGG), 178-198 (IMAY…AYNP), 201-221 (TLLN…MFML), 237-257 (MPLL…LPPL), 276-296 (VILP…YMRL), and 326-346 (LSPL…LALL).

Belongs to the complex I subunit 2 family. As to quaternary structure, core subunit of respiratory chain NADH dehydrogenase (Complex I) which is composed of 45 different subunits. Interacts with TMEM242.

The protein localises to the mitochondrion inner membrane. It catalyses the reaction a ubiquinone + NADH + 5 H(+)(in) = a ubiquinol + NAD(+) + 4 H(+)(out). Its function is as follows. Core subunit of the mitochondrial membrane respiratory chain NADH dehydrogenase (Complex I) which catalyzes electron transfer from NADH through the respiratory chain, using ubiquinone as an electron acceptor. Essential for the catalytic activity and assembly of complex I. In Pteropus pumilus (Little golden-mantled flying fox), this protein is NADH-ubiquinone oxidoreductase chain 2.